The chain runs to 283 residues: Undecaprenyl-diphosphatase (283 aa).

Helical transmembrane passes span 47-67 (PGLSVTAVIQLGSIVAVIAYF), 94-114 (LGIAMLIGTLPILIAGLCIKL), 127-147 (VPAIAVVSIVMALLLGFAELL), 197-217 (AARFSFLLGIPAITIAGLVEL), 227-247 (GGVLPVFVGICSAAVVSWLAI), and 261-281 (IFVVYRLLFGVLLLVWWSGSA).

It belongs to the UppP family.

Its subcellular location is the cell inner membrane. The catalysed reaction is di-trans,octa-cis-undecaprenyl diphosphate + H2O = di-trans,octa-cis-undecaprenyl phosphate + phosphate + H(+). Catalyzes the dephosphorylation of undecaprenyl diphosphate (UPP). Confers resistance to bacitracin. The chain is Undecaprenyl-diphosphatase from Synechococcus sp. (strain CC9311).